The following is a 379-amino-acid chain: Succinyl-diaminopimelate desuccinylase (379 aa).

Position 68 (histidine 68) interacts with Zn(2+). Aspartate 70 is a catalytic residue. Aspartate 101 is a binding site for Zn(2+). Glutamate 135 (proton acceptor) is an active-site residue. Glutamate 136, glutamate 164, and histidine 350 together coordinate Zn(2+).

It belongs to the peptidase M20A family. DapE subfamily. In terms of assembly, homodimer. Zn(2+) is required as a cofactor. Co(2+) serves as cofactor.

The enzyme catalyses N-succinyl-(2S,6S)-2,6-diaminopimelate + H2O = (2S,6S)-2,6-diaminopimelate + succinate. It participates in amino-acid biosynthesis; L-lysine biosynthesis via DAP pathway; LL-2,6-diaminopimelate from (S)-tetrahydrodipicolinate (succinylase route): step 3/3. Catalyzes the hydrolysis of N-succinyl-L,L-diaminopimelic acid (SDAP), forming succinate and LL-2,6-diaminopimelate (DAP), an intermediate involved in the bacterial biosynthesis of lysine and meso-diaminopimelic acid, an essential component of bacterial cell walls. The polypeptide is Succinyl-diaminopimelate desuccinylase (Bordetella bronchiseptica (strain ATCC BAA-588 / NCTC 13252 / RB50) (Alcaligenes bronchisepticus)).